We begin with the raw amino-acid sequence, 409 residues long: Probable type I inositol 1,4,5-trisphosphate 5-phosphatase (409 aa).

Belongs to the inositol 1,4,5-trisphosphate 5-phosphatase type I family.

It carries out the reaction 1D-myo-inositol 1,4,5-trisphosphate + H2O = 1D-myo-inositol 1,4-bisphosphate + phosphate. The catalysed reaction is 1D-myo-inositol 1,3,4,5-tetrakisphosphate + H2O = 1D-myo-inositol 1,3,4-trisphosphate + phosphate. This is Probable type I inositol 1,4,5-trisphosphate 5-phosphatase (ipp-5) from Caenorhabditis elegans.